Reading from the N-terminus, the 731-residue chain is EF-hand calcium-binding domain-containing protein 4B (731 aa).

A disordered region spans residues 1 to 45 (MAAPDGRVVSRPQRLGQGSGQGPKGSGACLHPLDSLEQKETQEQT). In terms of domain architecture, EF-hand spans 84–119 (LSLEELEDVFDALDADGNGYLTPQEFTTGFSHFFFS). Ca(2+) is bound by residues aspartate 97, aspartate 99, asparagine 101, tyrosine 103, and glutamate 108. Residues 201 to 382 (LTRIISQLQE…RERNKHLRDE (182 aa)) are a coiled coil. Positions 349–540 (MEVYRVTESL…ALCKEESSPS (192 aa)) are proline-rich domain (PRD) which mediates interaction with VAV1. Disordered stretches follow at residues 426 to 466 (SEEE…PYPR) and 494 to 528 (CSEEEEVSDQGVQGQIPEAPPLKLTPTSPRGQPVG). 9 residues coordinate GTP: serine 554, valine 556, glycine 557, lysine 558, threonine 559, serine 560, serine 571, proline 572, and threonine 577. Mg(2+) is bound at residue threonine 559. The segment at 572–580 (PGMAATVGI) is switch-I. The Mg(2+) site is built by threonine 577 and aspartate 600. Residues glycine 603, asparagine 658, lysine 659, aspartate 661, and alanine 689 each coordinate GTP. The segment at 603–619 (GQERYRCITQQFFRKAD) is switch-II. Cysteine 729 is lipidated: S-geranylgeranyl cysteine.

Belongs to the EFCAB4 family. Interacts with ORAI1 and STIM1; the interaction is direct and takes place in absence of Ca(2+). Forms a complex with ORAI1 and STIM1 at low concentration of Ca(2+), the complex dissociates at elevated Ca(2+) concentrations. Interacts with ORAI2 and ORAI3. As to quaternary structure, interacts with DYNC1H1. Interacts with the dynein-dynactin complex in a Ca(2+)-dependent manner. Interacts with VAV1. Requires Mg(2+) as cofactor. In terms of tissue distribution, expressed in the Jurkat T-cell line. As to expression, expressed in endothelial cells. Expressed in Weibel-Palade bodies (which are P-selectin/SELP negative) in endothelial cells. Expressed in the Jurkat T-cell line.

The protein resides in the cytoplasm. It is found in the cytoskeleton. It localises to the microtubule organizing center. The protein localises to the cell membrane. Its subcellular location is the golgi apparatus membrane. The protein resides in the golgi apparatus. It is found in the trans-Golgi network membrane. It localises to the vesicle. The enzyme catalyses GTP + H2O = GDP + phosphate + H(+). Ca(2+)-binding protein that plays a key role in store-operated Ca(2+) entry (SOCE) in T-cells by regulating CRAC channel activation. Acts as a cytoplasmic calcium-sensor that facilitates the clustering of ORAI1 and STIM1 at the junctional regions between the plasma membrane and the endoplasmic reticulum upon low Ca(2+) concentration. It thereby regulates CRAC channel activation, including translocation and clustering of ORAI1 and STIM1. Upon increase of cytoplasmic Ca(2+) resulting from opening of CRAC channels, dissociates from ORAI1 and STIM1, thereby destabilizing the ORAI1-STIM1 complex. In terms of biological role, rab GTPase that mediates the trafficking of Weibel-Palade bodies (WPBs) to microtubule organizing center (MTOC) in endothelial cells in response to acute inflammatory stimuli. During histamine (but not thrombin) stimulation of endothelial cells, the dynein-bound form induces retrograde transport of a subset of WPBs along microtubules to the MTOC in a Ca(2+)-independent manner and its GTPase activity is essential for this function. Ca(2+)-regulated dynein adapter protein that activates dynein-mediated transport and dynein-dynactin motility on microtubules and regulates endosomal trafficking of CD47. Acts as an intracellular signaling module bridging two important T-cell receptor (TCR) signaling pathways, Ca(2+)-NFAT and JNK, to affect T-cell activation. In resting T-cells, is predominantly localized near TGN network in a GTP-bound form, upon TCR stimulation, localizes at the immunological synapse via interaction with VAV1 to activate downstream Ca(2+)-NFAT and JNK signaling pathways. Plays a role in T-helper 1 (Th1) cell differentiation and T-helper 17 (Th17) cell effector function. Plays a role in store-operated Ca(2+) entry (SOCE) in T-cells by regulating CRAC channel activation. The chain is EF-hand calcium-binding domain-containing protein 4B from Homo sapiens (Human).